A 122-amino-acid polypeptide reads, in one-letter code: Urease subunit beta (122 aa).

Belongs to the urease beta subunit family. As to quaternary structure, heterotrimer of UreA (gamma), UreB (beta) and UreC (alpha) subunits. Three heterotrimers associate to form the active enzyme.

The protein localises to the cytoplasm. It catalyses the reaction urea + 2 H2O + H(+) = hydrogencarbonate + 2 NH4(+). The protein operates within nitrogen metabolism; urea degradation; CO(2) and NH(3) from urea (urease route): step 1/1. The polypeptide is Urease subunit beta (Flavobacterium johnsoniae (strain ATCC 17061 / DSM 2064 / JCM 8514 / BCRC 14874 / CCUG 350202 / NBRC 14942 / NCIMB 11054 / UW101) (Cytophaga johnsonae)).